The primary structure comprises 181 residues: Peptide deformylase (181 aa).

2 residues coordinate Fe cation: C103 and H145. E146 is an active-site residue. H149 lines the Fe cation pocket.

This sequence belongs to the polypeptide deformylase family. The cofactor is Fe(2+).

The enzyme catalyses N-terminal N-formyl-L-methionyl-[peptide] + H2O = N-terminal L-methionyl-[peptide] + formate. Removes the formyl group from the N-terminal Met of newly synthesized proteins. Requires at least a dipeptide for an efficient rate of reaction. N-terminal L-methionine is a prerequisite for activity but the enzyme has broad specificity at other positions. The protein is Peptide deformylase of Orientia tsutsugamushi (strain Boryong) (Rickettsia tsutsugamushi).